A 579-amino-acid polypeptide reads, in one-letter code: Folliculin (579 aa).

The tract at residues 32–82 (GAGSGDGAGRGEPADEEEGGIQMSSRIRAHSPAEGASAESSSPGPKKSDMC) is disordered. Ser62 and Ser73 each carry phosphoserine. Residues 63-76 (PAEGASAESSSPGP) show a composition bias toward low complexity. The uDENN FLCN/SMCR8-type domain maps to 86 to 242 (RSLAAGHPGY…RNGNAARSLT (157 aa)). A coiled-coil region spans residues 285–309 (QMEQLAELEEESESWDNSEAEEEEK). A compositionally biased stretch (acidic residues) spans 294 to 308 (EESESWDNSEAEEEE). Positions 294-321 (EESESWDNSEAEEEEKGPALPEGAEGRE) are disordered. Phosphoserine is present on residues Ser302, Ser406, Ser537, Ser542, and Ser571. The cDENN FLCN/SMCR8-type domain maps to 339 to 491 (QPRKLSVFKS…ILNKMEAALT (153 aa)). The dDENN FLCN/SMCR8-type domain maps to 493 to 558 (QNLSVDVVDQ…LLKFWMTGLS (66 aa)).

The protein belongs to the folliculin family. Interacts (via C-terminus) with FNIP1 or FNIP2 (via C-terminus). Component of the lysosomal folliculin complex (LFC), composed of FLCN, FNIP1 (or FNIP2), RagA/RRAGA or RagB/RRAGB GDP-bound, RagC/RRAGC or RagD/RRAGD GTP-bound, and Ragulator. Interaction with FNIP1 or FNIP2 mediates indirect interaction with the PRKAA1, PRKAB1 and PRKAG1 subunits of 5'-AMP-activated protein kinase (AMPK). Interacts with HSP90AA1 in the presence of FNIP1. Interacts with HSP70, STUB1, CDC37, AHSA1, CCT2, STIP1, PTGES3 and PPP5C. Interacts with GABARAP; interaction takes place in the presence of FNIP1 and/or FNIP2. Interacts with RILP; the interaction is direct and promotes association between RILP and RAB34. Interacts with KIF3A and KIF3B. Interacts with lactate dehydrogenase LDHA, but not LDHB; the interaction is direct, may preferentially bind LDHA dimers rather than tetramers, and regulates LDHA activity, acting as an uncompetitive inhibitor. Phosphorylation by ULK1 modulates the interaction with GABARAP and is required to regulate autophagy.

The protein resides in the lysosome membrane. Its subcellular location is the cytoplasm. It is found in the cytosol. The protein localises to the cell projection. It localises to the cilium. The protein resides in the cytoskeleton. Its subcellular location is the microtubule organizing center. It is found in the centrosome. The protein localises to the spindle. It localises to the nucleus. Its activity is regulated as follows. GTPase-activating activity is inhibited in the folliculin complex (LFC), which stabilizes the GDP-bound state of RagA/RRAGA (or RagB/RRAGB), because Arg-164 is located far from the RagC/RRAGC or RagD/RRAGD nucleotide pocket. Disassembly of the LFC complex upon amino acid restimulation liberates the GTPase-activating activity. Its function is as follows. Multi-functional protein, involved in both the cellular response to amino acid availability and in the regulation of glycolysis. GTPase-activating protein that plays a key role in the cellular response to amino acid availability through regulation of the non-canonical mTORC1 signaling cascade controlling the MiT/TFE factors TFEB and TFE3. Activates mTORC1 by acting as a GTPase-activating protein: specifically stimulates GTP hydrolysis by RagC/RRAGC or RagD/RRAGD, promoting the conversion to the GDP-bound state of RagC/RRAGC or RagD/RRAGD, and thereby activating the kinase activity of mTORC1. The GTPase-activating activity is inhibited during starvation and activated in presence of nutrients. Acts as a key component for non-canonical mTORC1-dependent control of the MiT/TFE factors TFEB and TFE3, while it is not involved in mTORC1-dependent phosphorylation of canonical RPS6KB1/S6K1 and EIF4EBP1/4E-BP1. In low-amino acid conditions, the lysosomal folliculin complex (LFC) is formed on the membrane of lysosomes, which inhibits the GTPase-activating activity of FLCN, inactivates mTORC1 and maximizes nuclear translocation of TFEB and TFE3. Upon amino acid restimulation, RagA/RRAGA (or RagB/RRAGB) nucleotide exchange promotes disassembly of the LFC complex and liberates the GTPase-activating activity of FLCN, leading to activation of mTORC1 and subsequent cytoplasmic retention of TFEB and TFE3. Indirectly acts as a positive regulator of Wnt signaling by promoting mTOR-dependent cytoplasmic retention of MiT/TFE factor TFE3. Required for the exit of hematopoietic stem cell from pluripotency by promoting mTOR-dependent cytoplasmic retention of TFE3, thereby increasing Wnt signaling. Involved in the control of embryonic stem cells differentiation; together with LAMTOR1 it is necessary to recruit and activate RagC/RRAGC and RagD/RRAGD at the lysosomes, and to induce exit of embryonic stem cells from pluripotency via non-canonical, mTOR-independent TFE3 inactivation. Acts as an inhibitor of browning of adipose tissue by regulating mTOR-dependent cytoplasmic retention of TFE3. In response to flow stress, regulates STK11/LKB1 accumulation and mTORC1 activation through primary cilia: may act by recruiting STK11/LKB1 to primary cilia for activation of AMPK resided at basal bodies, causing mTORC1 down-regulation. Together with FNIP1 and/or FNIP2, regulates autophagy: following phosphorylation by ULK1, interacts with GABARAP and promotes autophagy. Required for starvation-induced perinuclear clustering of lysosomes by promoting association of RILP with its effector RAB34. Regulates glycolysis by binding to lactate dehydrogenase LDHA, acting as an uncompetitive inhibitor. The polypeptide is Folliculin (Bos taurus (Bovine)).